Consider the following 607-residue polypeptide: Elongation factor 4 (607 aa).

A tr-type G domain is found at 11-193; that stretch reads SKIRNFSIIA…QIVEKVPAPT (183 aa). GTP-binding positions include 23–28 and 140–143; these read DHGKST and NKID.

This sequence belongs to the TRAFAC class translation factor GTPase superfamily. Classic translation factor GTPase family. LepA subfamily.

The protein localises to the cell membrane. It catalyses the reaction GTP + H2O = GDP + phosphate + H(+). Its function is as follows. Required for accurate and efficient protein synthesis under certain stress conditions. May act as a fidelity factor of the translation reaction, by catalyzing a one-codon backward translocation of tRNAs on improperly translocated ribosomes. Back-translocation proceeds from a post-translocation (POST) complex to a pre-translocation (PRE) complex, thus giving elongation factor G a second chance to translocate the tRNAs correctly. Binds to ribosomes in a GTP-dependent manner. This is Elongation factor 4 from Bacillus cereus (strain AH820).